The sequence spans 396 residues: Tryptophan synthase beta chain (396 aa).

An N6-(pyridoxal phosphate)lysine modification is found at K88.

It belongs to the TrpB family. In terms of assembly, tetramer of two alpha and two beta chains. Pyridoxal 5'-phosphate serves as cofactor.

The enzyme catalyses (1S,2R)-1-C-(indol-3-yl)glycerol 3-phosphate + L-serine = D-glyceraldehyde 3-phosphate + L-tryptophan + H2O. It participates in amino-acid biosynthesis; L-tryptophan biosynthesis; L-tryptophan from chorismate: step 5/5. In terms of biological role, the beta subunit is responsible for the synthesis of L-tryptophan from indole and L-serine. The protein is Tryptophan synthase beta chain of Shewanella baltica (strain OS185).